A 579-amino-acid chain; its full sequence is UPF0329 protein ECU06_1620 (579 aa).

Disordered regions lie at residues 325–360 (EEKA…GEEA) and 370–389 (ARRK…KIHK). Residues 329–338 (KGRKDGKKKS) show a composition bias toward basic residues. Residues 345–360 (KEEESETEEVEAGEEA) are compositionally biased toward acidic residues.

This sequence belongs to the UPF0329 family.

This Encephalitozoon cuniculi (strain GB-M1) (Microsporidian parasite) protein is UPF0329 protein ECU06_1620.